The following is a 284-amino-acid chain: GPN-loop GTPase 3 (284 aa).

13–18 lines the GTP pocket; sequence GSGKST. Positions 72-74 match the Gly-Pro-Asn (GPN)-loop; involved in dimer interface motif; it reads GPN. Residue 174 to 177 participates in GTP binding; it reads TKMD. Positions 261–284 are disordered; the sequence is KEPKEHEDESSSMFDEYFQEHQNE.

The protein belongs to the GPN-loop GTPase family. As to quaternary structure, heterodimer with GPN1. Binds to RNA polymerase II (RNAPII). Interacts directly with subunits RPB4 and RPB7 and the CTD of RPB1.

Its function is as follows. Small GTPase required for proper localization of RNA polymerase II (RNAPII). May act at an RNAP assembly step prior to nuclear import. The protein is GPN-loop GTPase 3 of Bos taurus (Bovine).